Reading from the N-terminus, the 246-residue chain is MNDRIIEFDPLIEGVLINRYKRFLADIELETGEVVTAHCANTGPMKGLLTEGAKVRMSVSPSPKRKLPFTWEQICVLDAKNEEVWVGINTLFANKLIKKVIEKNLLNEIIGEIETIKAEVPYGKDKKSRIDFFLTPKSSNPDKRNIYIEVKNTTWMKGNVALFPDTVTKRGQKHLIELKELIPASKSILILCITRKDACFFSPGDDADPLYGNLFRESFSAGMIPIPCSFEFHKDHITWNGIKPLK.

Belongs to the SfsA family.

This chain is Sugar fermentation stimulation protein homolog, found in Prochlorococcus marinus (strain MIT 9312).